An 83-amino-acid chain; its full sequence is Small ribosomal subunit protein bS16 (83 aa).

Belongs to the bacterial ribosomal protein bS16 family.

This is Small ribosomal subunit protein bS16 from Borrelia duttonii (strain Ly).